The following is a 232-amino-acid chain: 6-hydroxymethyl-7,8-dihydropterin pyrophosphokinase (232 aa).

It belongs to the archaeal 6-HMPDK family. Requires Mg(2+) as cofactor.

It catalyses the reaction 6-hydroxymethyl-7,8-dihydropterin + ATP = (7,8-dihydropterin-6-yl)methyl diphosphate + AMP + H(+). It functions in the pathway cofactor biosynthesis; 5,6,7,8-tetrahydromethanopterin biosynthesis. Its function is as follows. Catalyzes the transfer of diphosphate from ATP to 6-hydroxymethyl-7,8-dihydropterin (6-HMD), leading to 6-hydroxymethyl-7,8-dihydropterin diphosphate (6-HMDP). The sequence is that of 6-hydroxymethyl-7,8-dihydropterin pyrophosphokinase from Methanothermobacter thermautotrophicus (strain ATCC 29096 / DSM 1053 / JCM 10044 / NBRC 100330 / Delta H) (Methanobacterium thermoautotrophicum).